Consider the following 238-residue polypeptide: Probable phosphatase phospho2 (238 aa).

The Nucleophile role is filled by Asp-8. The Mg(2+) site is built by Asp-8 and Asp-10. The Proton donor role is filled by Asp-10. The substrate site is built by Asp-19 and Asp-99. Asp-179 lines the Mg(2+) pocket.

The protein belongs to the HAD-like hydrolase superfamily. PHOSPHO family. Mg(2+) is required as a cofactor.

Functionally, probable phosphatase. In Xenopus tropicalis (Western clawed frog), this protein is Probable phosphatase phospho2 (phospho2).